We begin with the raw amino-acid sequence, 923 residues long: Mitochondrial 10-formyltetrahydrofolate dehydrogenase (923 aa).

The N-terminal 19 residues, 1-19 (MLRRGSQALRRFSTGRVYF), are a transit peptide targeting the mitochondrion; not cleaved. The tract at residues 23 to 331 (LKLALIGQSL…PASQYFSTGE (309 aa)) is hydrolase domain. A Phosphoserine modification is found at Ser-31. Lys-60 carries the N6-succinyllysine modification. 110–112 (QFI) is a binding site for (6R)-10-formyltetrahydrofolate. His-128 (proton donor) is an active-site residue. Asp-164 serves as a coordination point for (6R)-10-formyltetrahydrofolate. The 78-residue stretch at 339–416 (AEEVKVAETI…GFIQKVVRKL (78 aa)) folds into the Carrier domain. Ser-375 is subject to O-(pantetheine 4'-phosphoryl)serine. Residues 438–923 (MVKMPYQCFI…LKTKTVTLEY (486 aa)) are aldehyde dehydrogenase domain. NADP(+) is bound by residues 592-594 (IPW) and 618-621 (KPAQ). Ser-650 bears the Phosphoserine mark. Residues 651-656 (GGIAGQ) and 671-672 (GS) each bind NADP(+). Position 681 is an N6-succinyllysine (Lys-681). Glu-694 serves as the catalytic Proton acceptor. 694–695 (EL) provides a ligand contact to NADP(+). Cys-728 functions as the Proton donor in the catalytic mechanism. NADP(+) is bound at residue Lys-778. Lys-788 carries the N6-succinyllysine modification. 825–827 (ESF) contributes to the NADP(+) binding site. Lys-903 carries the N6-acetyllysine modification.

The protein in the N-terminal section; belongs to the GART family. It in the C-terminal section; belongs to the aldehyde dehydrogenase family. ALDH1L subfamily. In terms of processing, phosphopantetheinylation at Ser-375 by AASDHPPT is required for the formyltetrahydrofolate dehydrogenase activity. Highly expressed in pancreas, heart, brain and skeletal muscle.

It is found in the mitochondrion. The enzyme catalyses (6R)-10-formyltetrahydrofolate + NADP(+) + H2O = (6S)-5,6,7,8-tetrahydrofolate + CO2 + NADPH + H(+). In terms of biological role, mitochondrial 10-formyltetrahydrofolate dehydrogenase that catalyzes the NADP(+)-dependent conversion of 10-formyltetrahydrofolate to tetrahydrofolate and carbon dioxide. This is Mitochondrial 10-formyltetrahydrofolate dehydrogenase from Homo sapiens (Human).